Reading from the N-terminus, the 385-residue chain is 1-deoxy-D-xylulose 5-phosphate reductoisomerase (385 aa).

6 residues coordinate NADPH: Thr10, Gly11, Ser12, Ile13, Lys37, and Asn124. Lys125 is a 1-deoxy-D-xylulose 5-phosphate binding site. Glu126 is an NADPH binding site. Asp150 is a binding site for Mn(2+). Residues Ser151, Glu152, Ser176, and His199 each coordinate 1-deoxy-D-xylulose 5-phosphate. Glu152 is a Mn(2+) binding site. Gly205 is a binding site for NADPH. Ser212, Asn217, Lys218, and Glu221 together coordinate 1-deoxy-D-xylulose 5-phosphate. Glu221 lines the Mn(2+) pocket.

The protein belongs to the DXR family. Mg(2+) serves as cofactor. Requires Mn(2+) as cofactor.

It carries out the reaction 2-C-methyl-D-erythritol 4-phosphate + NADP(+) = 1-deoxy-D-xylulose 5-phosphate + NADPH + H(+). Its pathway is isoprenoid biosynthesis; isopentenyl diphosphate biosynthesis via DXP pathway; isopentenyl diphosphate from 1-deoxy-D-xylulose 5-phosphate: step 1/6. Catalyzes the NADPH-dependent rearrangement and reduction of 1-deoxy-D-xylulose-5-phosphate (DXP) to 2-C-methyl-D-erythritol 4-phosphate (MEP). The chain is 1-deoxy-D-xylulose 5-phosphate reductoisomerase from Clostridium botulinum (strain ATCC 19397 / Type A).